We begin with the raw amino-acid sequence, 273 residues long: Methylthioribulose-1-phosphate dehydratase (273 aa).

The disordered stretch occupies residues 1–27 (MCPTCPPSAASASSENNNTDNNDHLVL). Cysteine 114 serves as a coordination point for substrate. Residues histidine 132 and histidine 134 each coordinate Zn(2+). The active-site Proton donor/acceptor is the glutamate 168. Histidine 225 is a Zn(2+) binding site.

The protein belongs to the aldolase class II family. MtnB subfamily. It depends on Zn(2+) as a cofactor.

It localises to the cytoplasm. The enzyme catalyses 5-(methylsulfanyl)-D-ribulose 1-phosphate = 5-methylsulfanyl-2,3-dioxopentyl phosphate + H2O. Its pathway is amino-acid biosynthesis; L-methionine biosynthesis via salvage pathway; L-methionine from S-methyl-5-thio-alpha-D-ribose 1-phosphate: step 2/6. In terms of biological role, catalyzes the dehydration of methylthioribulose-1-phosphate (MTRu-1-P) into 2,3-diketo-5-methylthiopentyl-1-phosphate (DK-MTP-1-P). This chain is Methylthioribulose-1-phosphate dehydratase, found in Sordaria macrospora (strain ATCC MYA-333 / DSM 997 / K(L3346) / K-hell).